We begin with the raw amino-acid sequence, 464 residues long: Glutamate--tRNA ligase (464 aa).

The short motif at 9-19 (PSPTGYLHIGG) is the 'HIGH' region element. Residues 242-246 (KISKR) carry the 'KMSKS' region motif. Lysine 245 provides a ligand contact to ATP.

It belongs to the class-I aminoacyl-tRNA synthetase family. Glutamate--tRNA ligase type 1 subfamily. As to quaternary structure, monomer.

The protein resides in the cytoplasm. The enzyme catalyses tRNA(Glu) + L-glutamate + ATP = L-glutamyl-tRNA(Glu) + AMP + diphosphate. Its function is as follows. Catalyzes the attachment of glutamate to tRNA(Glu) in a two-step reaction: glutamate is first activated by ATP to form Glu-AMP and then transferred to the acceptor end of tRNA(Glu). This Neisseria gonorrhoeae (strain ATCC 700825 / FA 1090) protein is Glutamate--tRNA ligase.